A 513-amino-acid polypeptide reads, in one-letter code: Voltage-gated potassium channel regulatory subunit KCNG1 (513 aa).

The Cytoplasmic portion of the chain corresponds to 1-224 (MTLLPGDNSD…DMVERPHSGL (224 aa)). The interval 184-204 (EEDDALDSEGRDSEGPAEGEG) is disordered. Basic and acidic residues predominate over residues 191-204 (SEGRDSEGPAEGEG). Residues 225-246 (PGKVFACLSVLFVTVTAVNLSV) form a helical membrane-spanning segment. At 247–267 (STLPSLREEEEQGHCSQMCHN) the chain is on the extracellular side. A helical membrane pass occupies residues 268 to 289 (VFIVESVCVGWFSLEFLLRLIQ). At 290–300 (APSKFAFLRSP) the chain is on the cytoplasmic side. Residues 301–321 (LTLIDLVAILPYYITLLVDGA) traverse the membrane as a helical segment. Residues 322 to 338 (AAGRRKPGAGNSYLDKV) are Extracellular-facing. The helical; Voltage-sensor transmembrane segment at 339-359 (GLVLRVLRALRILYVMRLARH) threads the bilayer. Residues 360–374 (SLGLQTLGLTARRCT) lie on the Cytoplasmic side of the membrane. The helical transmembrane segment at 375–396 (REFGLLLLFLCVAIALFAPLLY) threads the bilayer. Residues 397 to 411 (VIENEMADSPEFTSI) are Extracellular-facing. An intramembrane region (helical) is located at residues 412 to 423 (PACYWWAVITMT). The Selectivity filter motif lies at 424-429 (TVGYGD). An intramembrane segment occupies 424–431 (TVGYGDMV). At 432–438 (PRSTPGQ) the chain is on the extracellular side. Residues 439–467 (VVALSSILSGILLMAFPVTSIFHTFSRSY) form a helical membrane-spanning segment. Over 468-513 (LELKQEQERVMFRRAQFLIKTKSQLSVSQDSDILFGSASSDTRDNN) the chain is Cytoplasmic.

Belongs to the potassium channel family. G (TC 1.A.1.2) subfamily. Kv6.1/KCNG1 sub-subfamily. In terms of assembly, heterotetramer with KCNB1. Heterotetramer with KCNB2. As to expression, expressed in brain and placenta, and at much lower levels in kidney and pancreas.

It is found in the cell membrane. Functionally, regulatory alpha-subunit of the voltage-gated potassium (Kv) channel which, when coassembled with KCNB1 or KCNB2, can modulate their expression and their gating kinetics by acting on deactivation upon repolarization and inactivation during maintained depolarization. Potassium channel subunit that does not form functional channels by itself. The sequence is that of Voltage-gated potassium channel regulatory subunit KCNG1 from Homo sapiens (Human).